The sequence spans 303 residues: Taste receptor type 2 member 13 (303 aa).

Residues Met1 to Ser7 lie on the Extracellular side of the membrane. The chain crosses the membrane as a helical span at residues Ile8–Val28. Residues Leu29–Arg55 lie on the Cytoplasmic side of the membrane. A helical transmembrane segment spans residues Ile56 to Phe76. Over Val77–Met85 the chain is Extracellular. The helical transmembrane segment at Ile86 to Phe106 threads the bilayer. Residues Tyr107–Lys128 lie on the Cytoplasmic side of the membrane. Residues Val129 to Asn149 form a helical membrane-spanning segment. The Extracellular segment spans residues Ile150–Thr184. Residues Asn162 and Asn166 are each glycosylated (N-linked (GlcNAc...) asparagine). Residues Met185 to Leu205 traverse the membrane as a helical segment. Over Gln206–Lys232 the chain is Cytoplasmic. A helical membrane pass occupies residues Ile233 to Ile253. Residues Ser254–Ala261 are Extracellular-facing. A helical transmembrane segment spans residues Ile262–Ile282. The Cytoplasmic portion of the chain corresponds to Leu283 to Arg303.

Belongs to the G-protein coupled receptor T2R family.

Its subcellular location is the membrane. In terms of biological role, receptor that may play a role in the perception of bitterness and is gustducin-linked. May play a role in sensing the chemical composition of the gastrointestinal content. The activity of this receptor may stimulate alpha gustducin, mediate PLC-beta-2 activation and lead to the gating of TRPM5. The polypeptide is Taste receptor type 2 member 13 (TAS2R13) (Pongo pygmaeus (Bornean orangutan)).